Consider the following 614-residue polypeptide: Glutamine--fructose-6-phosphate aminotransferase [isomerizing] (614 aa).

The Nucleophile; for GATase activity role is filled by cysteine 2. Residues 2–221 form the Glutamine amidotransferase type-2 domain; that stretch reads CGIVGYIGKR…DGEIAVINRG (220 aa). SIS domains follow at residues 291 to 430 and 463 to 604; these read YKEK…EKGT and LSKT…VDQP. Catalysis depends on lysine 609, which acts as the For Fru-6P isomerization activity.

As to quaternary structure, homodimer.

It is found in the cytoplasm. The catalysed reaction is D-fructose 6-phosphate + L-glutamine = D-glucosamine 6-phosphate + L-glutamate. Functionally, catalyzes the first step in hexosamine metabolism, converting fructose-6P into glucosamine-6P using glutamine as a nitrogen source. This Bacteroides thetaiotaomicron (strain ATCC 29148 / DSM 2079 / JCM 5827 / CCUG 10774 / NCTC 10582 / VPI-5482 / E50) protein is Glutamine--fructose-6-phosphate aminotransferase [isomerizing].